The chain runs to 80 residues: Trefoil factor 3 (80 aa).

An N-terminal signal peptide occupies residues 1–21; it reads MAARALCMLGLVLALLSSSSA. Positions 30–73 constitute a P-type domain; that stretch reads NQCAVPAKDRVDCGYPHVTPKECNNRGCCFDSRIPGVPWCFKPL. Intrachain disulfides connect C32–C58, C42–C57, and C52–C69.

As to quaternary structure, monomer. Homodimer; disulfide-linked. Expressed in goblet cells of the intestines and colon (at protein level). Expressed by goblet cells of small and large intestinal epithelia and also by the uterus. Also expressed in the hypothalamus where it is detected in paraventricular, periventricular and supraoptic nuclei (at protein level).

It localises to the secreted. The protein localises to the extracellular space. It is found in the extracellular matrix. Its subcellular location is the cytoplasm. Involved in the maintenance and repair of the intestinal mucosa. Promotes the mobility of epithelial cells in healing processes (motogen). The polypeptide is Trefoil factor 3 (TFF3) (Homo sapiens (Human)).